Here is a 149-residue protein sequence, read N- to C-terminus: Calmodulin (149 aa).

A2 carries the post-translational modification N-acetylalanine. 4 consecutive EF-hand domains span residues 8–43 (EQIA…LGQN), 44–79 (PTEA…KMKD), 81–116 (DSEE…LGEK), and 117–149 (LTDE…MTSK). Ca(2+)-binding residues include D21, D23, D25, T27, E32, D57, D59, N61, T63, E68, D94, D96, N98, and E105. N6,N6,N6-trimethyllysine is present on K116. 5 residues coordinate Ca(2+): D130, D132, D134, Q136, and E141.

It belongs to the calmodulin family.

Its function is as follows. Calmodulin mediates the control of a large number of enzymes, ion channels and other proteins by Ca(2+). Among the enzymes to be stimulated by the calmodulin-Ca(2+) complex are a number of protein kinases and phosphatases. The chain is Calmodulin from Metridium senile (Brown sea anemone).